A 471-amino-acid chain; its full sequence is MQSNKTFNLEKQNHTPRKHHQHHHQQQHHQQQQQQPPPPPIPANGQQASSQNEGLTIDLKNFRKPGEKTFTQRSRLFVGNLPPDITEEEMRKLFEKYGKAGEVFIHKDKGFGFIRLETRTLAEIAKVELDNMPLRGKQLRVRFACHSASLTVRNLPQYVSNELLEEAFSVFGQVERAVVIVDDRGRPSGKGIVEFSGKPAARKALDRCSEGSFLLTTFPRPVTVEPMDQLDDEEGLPEKLVIKNQQFHKEREQPPRFAQPGSFEYEYAMRWKALIEMEKQQQDQVDRNIKEAREKLEMEMEAARHEHQVMLMRQDLMRRQEELRRMEELHNQEVQKRKQLELRQEEERRRREEEMRRQQEEMMRRQQEGFKGTFPDAREQEIRMGQMAMGGAMGINNRGAMPPAPVPAGTPAPPGPATMMPDGTLGLTPPTTERFGQAATMEGIGAIGGTPPAFNRAAPGAEFAPNKRRRY.

At Met-1 the chain carries N-acetylmethionine. The span at 1 to 10 (MQSNKTFNLE) shows a compositional bias: polar residues. The segment at 1–51 (MQSNKTFNLEKQNHTPRKHHQHHHQQQHHQQQQQQPPPPPIPANGQQASSQ) is disordered. The residue at position 5 (Lys-5) is an N6-acetyllysine; alternate. Lys-5 participates in a covalent cross-link: Glycyl lysine isopeptide (Lys-Gly) (interchain with G-Cter in SUMO2); alternate. The residue at position 6 (Thr-6) is a Phosphothreonine. An N6-acetyllysine modification is found at Lys-11. Positions 14–27 (HTPRKHHQHHHQQQ) are enriched in basic residues. Residues 54-373 (GLTIDLKNFR…RRQQEGFKGT (320 aa)) form a DBHS region. Residues Lys-60, Lys-96, Lys-99, and Lys-126 each participate in a glycyl lysine isopeptide (Lys-Gly) (interchain with G-Cter in SUMO2) cross-link. One can recognise an RRM 1 domain in the interval 74–141 (SRLFVGNLPP…MPLRGKQLRV (68 aa)). The residue at position 147 (Ser-147) is a Phosphoserine. The 82-residue stretch at 148 to 229 (ASLTVRNLPQ…RPVTVEPMDQ (82 aa)) folds into the RRM 2 domain. Lys-190 participates in a covalent cross-link: Glycyl lysine isopeptide (Lys-Gly) (interchain with G-Cter in SUMO2). Lys-198 carries the N6-acetyllysine; alternate modification. Lys-198 participates in a covalent cross-link: Glycyl lysine isopeptide (Lys-Gly) (interchain with G-Cter in SUMO2); alternate. Residues Lys-243 and Lys-249 each participate in a glycyl lysine isopeptide (Lys-Gly) (interchain with G-Cter in SUMO2) cross-link. Ser-262 is modified (phosphoserine). Residues 268-372 (AMRWKALIEM…MRRQQEGFKG (105 aa)) are a coiled coil. Lys-295 is modified (N6-acetyllysine). Position 371 is an N6-acetyllysine; alternate (Lys-371). Residue Lys-371 forms a Glycyl lysine isopeptide (Lys-Gly) (interchain with G-Cter in SUMO2); alternate linkage. 3 positions are modified to phosphothreonine: Thr-428, Thr-440, and Thr-450. Positions 443-471 (GIGAIGGTPPAFNRAAPGAEFAPNKRRRY) are disordered. Arg-456 is modified (omega-N-methylarginine). Lys-467 participates in a covalent cross-link: Glycyl lysine isopeptide (Lys-Gly) (interchain with G-Cter in SUMO2).

In terms of assembly, monomer and component of the SFPQ-NONO complex, which is probably a heterotetramer of two 52 kDa (NONO) and two 100 kDa (SFPQ) subunits. NONO is a component of spliceosome and U5.4/6 snRNP complexes. Interacts with CPNE4 (via VWFA domain). Forms heterodimers with PSPC1; this involves formation of a coiled coil domain by helices from both proteins. Part of complex consisting of SFPQ, NONO and MATR3. Part of a complex consisting of SFPQ, NONO and NR5A1. Part of a complex consisting of SFPQ, NONO and TOP1. Interacts with SPI1 and SPIB. Interacts with RNF43. Interacts with PER1 and PER2. Part of the HDP-RNP complex composed of at least HEXIM1, PRKDC, XRCC5, XRCC6, paraspeckle proteins (SFPQ, NONO, PSPC1, RBM14, and MATR3) and NEAT1 RNA. Interacts (via second RRM domain) with WASL; the interaction is direct. Component of a multiprotein complex with WASL and SFPQ. Interacts with ERCC6. Interacts (via DNA-binding domain) with TET1. (Microbial infection) Interacts with HIV-2 Capsid protein p24; interacts with high affinity. Interacts with HIV-1 Capsid protein p24; interacts with low affinity. Post-translationally, the N-terminus is blocked. Heart, brain, placenta, lung, liver, skeletal muscle, kidney and pancreas. Also found in a number of breast tumor cell lines.

Its subcellular location is the nucleus. It localises to the nucleolus. The protein resides in the nucleus speckle. It is found in the chromosome. Functionally, DNA- and RNA binding protein, involved in several nuclear processes. Binds the conventional octamer sequence in double-stranded DNA. Also binds single-stranded DNA and RNA at a site independent of the duplex site. Involved in pre-mRNA splicing, probably as a heterodimer with SFPQ. Interacts with U5 snRNA, probably by binding to a purine-rich sequence located on the 3' side of U5 snRNA stem 1b. Together with PSPC1, required for the formation of nuclear paraspeckles. The SFPQ-NONO heteromer associated with MATR3 may play a role in nuclear retention of defective RNAs. The SFPQ-NONO heteromer may be involved in DNA unwinding by modulating the function of topoisomerase I/TOP1. The SFPQ-NONO heteromer may be involved in DNA non-homologous end joining (NHEJ) required for double-strand break repair and V(D)J recombination and may stabilize paired DNA ends. In vitro, the complex strongly stimulates DNA end joining, binds directly to the DNA substrates and cooperates with the Ku70/G22P1-Ku80/XRCC5 (Ku) dimer to establish a functional preligation complex. NONO is involved in transcriptional regulation. The SFPQ-NONO-NR5A1 complex binds to the CYP17 promoter and regulates basal and cAMP-dependent transcriptional activity. NONO binds to an enhancer element in long terminal repeats of endogenous intracisternal A particles (IAPs) and activates transcription. Regulates the circadian clock by repressing the transcriptional activator activity of the CLOCK-BMAL1 heterodimer. Important for the functional organization of GABAergic synapses. Plays a specific and important role in the regulation of synaptic RNAs and GPHN/gephyrin scaffold structure, through the regulation of GABRA2 transcript. Plays a key role during neuronal differentiation by recruiting TET1 to genomic loci and thereby regulating 5-hydroxymethylcytosine levels. Plays a role in the regulation of DNA virus-mediated innate immune response by assembling into the HDP-RNP complex, a complex that serves as a platform for IRF3 phosphorylation and subsequent innate immune response activation through the cGAS-STING pathway. Promotes activation of the cGAS-STING pathway in response to HIV-2 infection: acts by interacting with HIV-2 Capsid protein p24, thereby promoting detection of viral DNA by CGAS, leading to CGAS-mediated inmmune activation. In contrast, the weak interaction with HIV-1 Capsid protein p24 does not allow activation of the cGAS-STING pathway. The protein is Non-POU domain-containing octamer-binding protein of Homo sapiens (Human).